The sequence spans 261 residues: Proteasome subunit beta type-2 (261 aa).

A propeptide spans 1–29 (MAGLSFDNYQRNNFLAENSHTQPKATSTG) (removed in mature form). The active-site Nucleophile is threonine 30.

Belongs to the peptidase T1B family. In terms of assembly, the 26S proteasome consists of a 20S proteasome core and two 19S regulatory subunits. The 20S proteasome core is composed of 28 subunits that are arranged in four stacked rings, resulting in a barrel-shaped structure. The two end rings are each formed by seven alpha subunits, and the two central rings are each formed by seven beta subunits. The catalytic chamber with the active sites is on the inside of the barrel.

The protein localises to the cytoplasm. It localises to the nucleus. It carries out the reaction Cleavage of peptide bonds with very broad specificity.. The proteasome degrades poly-ubiquitinated proteins in the cytoplasm and in the nucleus. It is essential for the regulated turnover of proteins and for the removal of misfolded proteins. The proteasome is a multicatalytic proteinase complex that is characterized by its ability to cleave peptides with Arg, Phe, Tyr, Leu, and Glu adjacent to the leaving group at neutral or slightly basic pH. It has an ATP-dependent proteolytic activity. In Saccharomyces cerevisiae (strain ATCC 204508 / S288c) (Baker's yeast), this protein is Proteasome subunit beta type-2 (PUP1).